A 100-amino-acid chain; its full sequence is NADH-quinone oxidoreductase subunit K (100 aa).

3 helical membrane passes run 4-24 (TSYYVLLSAILFTIGVLGVLL), 29-49 (IVVFMAVELMLNAANLALVAF), and 60-80 (VIVFFVITVAAAEVAVGLALL).

It belongs to the complex I subunit 4L family. NDH-1 is composed of 14 different subunits. Subunits NuoA, H, J, K, L, M, N constitute the membrane sector of the complex.

The protein localises to the cell membrane. The catalysed reaction is a quinone + NADH + 5 H(+)(in) = a quinol + NAD(+) + 4 H(+)(out). Functionally, NDH-1 shuttles electrons from NADH, via FMN and iron-sulfur (Fe-S) centers, to quinones in the respiratory chain. The immediate electron acceptor for the enzyme in this species is believed to be ubiquinone. Couples the redox reaction to proton translocation (for every two electrons transferred, four hydrogen ions are translocated across the cytoplasmic membrane), and thus conserves the redox energy in a proton gradient. This chain is NADH-quinone oxidoreductase subunit K, found in Chloroflexus aurantiacus (strain ATCC 29366 / DSM 635 / J-10-fl).